Here is a 683-residue protein sequence, read N- to C-terminus: DNA ligase (683 aa).

NAD(+)-binding positions include 42 to 46 (DAEYD), 91 to 92 (SL), and Glu122. Lys124 (N6-AMP-lysine intermediate) is an active-site residue. NAD(+) is bound by residues Arg145, Glu182, Lys299, and Lys323. The Zn(2+) site is built by Cys417, Cys420, Cys435, and Cys441. The region spanning 602–683 (APQGVLAGKT…MRKLLEGQTT (82 aa)) is the BRCT domain.

Belongs to the NAD-dependent DNA ligase family. LigA subfamily. The cofactor is Mg(2+). Mn(2+) is required as a cofactor.

The enzyme catalyses NAD(+) + (deoxyribonucleotide)n-3'-hydroxyl + 5'-phospho-(deoxyribonucleotide)m = (deoxyribonucleotide)n+m + AMP + beta-nicotinamide D-nucleotide.. DNA ligase that catalyzes the formation of phosphodiester linkages between 5'-phosphoryl and 3'-hydroxyl groups in double-stranded DNA using NAD as a coenzyme and as the energy source for the reaction. It is essential for DNA replication and repair of damaged DNA. The protein is DNA ligase of Paraburkholderia phymatum (strain DSM 17167 / CIP 108236 / LMG 21445 / STM815) (Burkholderia phymatum).